We begin with the raw amino-acid sequence, 4684 residues long: Plectin (4684 aa).

The interval 1-1470 (MVAGMLMPRD…SELTTLTSQY (1470 aa)) is globular 1. Residues F20 and R21 each carry the phosphoserine modification. V26 is modified (phosphotyrosine). A Phosphoserine modification is found at G42. Residue T113 is modified to Phosphothreonine. Phosphoserine occurs at positions 125 and 149. The segment at 144–179 (ELEEVSPETPVVPATTQRTLARPGPEPAPATDERDR) is disordered. Residues 175–400 (DERDRVQKKT…YVSSLYDAMP (226 aa)) are actin-binding. 2 consecutive Calponin-homology (CH) domains span residues 179–282 (RVQK…LHFQ) and 295–400 (MTAK…DAMP). The stretch at 645-710 (LQSVQRRPEL…SIEEFRAKIE (66 aa)) is one Spectrin 1 repeat. S720 carries the post-translational modification Phosphoserine. 2 Spectrin repeats span residues 740-824 (KLLN…REDH) and 837-930 (LQTQ…AVVQ). An SH3 domain is found at 941–998 (RGRLPLLAVCDYKQVEVTVHKGDECQLVGPAQPSHWKVLSSSGSEAAVPSVCFLVPPP). A required for interaction with intermediate filament proteins region spans residues 964–4574 (ECQLVGPAQP…VGAYSKYLTC (3611 aa)). S1047 bears the Phosphoserine mark. The Spectrin 4 repeat unit spans residues 1315–1415 (RERVAQLLER…QRFAKQYINA (101 aa)). S1435 carries the phosphoserine modification. Residues 1469-2756 (QYIKFISETL…AHSEEVTASQ (1288 aa)) adopt a coiled-coil conformation. The interval 1471–2755 (IKFISETLRR…LAHSEEVTAS (1285 aa)) is central fibrous rod domain. The segment at 1618–1650 (RAEEAEAQKRQAQEEAERLRRQVQDESQRKRQA) is disordered. The residue at position 1721 (S1721) is a Phosphoserine. K1725 is modified (N6-acetyllysine). S1732 is modified (phosphoserine). Disordered regions lie at residues 1794-1836 (LAQA…KQRQ), 2105-2139 (EAARQRQLAAEEERRRREAEERVQKSLAAEEEAAR), and 2217-2307 (RGEA…MEKH). Composition is skewed to basic and acidic residues over residues 1798-1836 (EAEKQKEEAEREARRRGKAEEQAVRQRELAEQELEKQRQ), 2105-2128 (EAARQRQLAAEEERRRREAEERVQ), and 2217-2258 (RGEA…KQSA). Residues 2259 to 2272 (EEQAQARAQAQAAA) show a composition bias toward low complexity. Positions 2273–2288 (EKLRKEAEQEAARRAQ) are enriched in basic and acidic residues. Phosphoserine is present on S2631. K2636 is subject to N6-acetyllysine. Disordered stretches follow at residues 2668-2707 (REEQQRQQQQMEQERQRLVASMEEARRRQHEAEEGVRRKQ) and 2763-2784 (LPNGRDALDGPAAEAEPEHSFD). Residues 2679–2707 (EQERQRLVASMEEARRRQHEAEEGVRRKQ) show a composition bias toward basic and acidic residues. The interval 2756-4684 (QVAATKTLPN…SLGGPESAVA (1929 aa)) is globular 2. S2782 and S2802 each carry phosphoserine. Plectin repeat units follow at residues 2826-2863 (RHYLQGRSSIAGLLLKATNEKLSVYAALQRQLLSPGTA), 2864-2901 (LILLEAQAASGFLLDPVRNRRLTVNEAVKEGVVGPELH), 2902-2939 (HKLLSAERAVTGYKDPYTGQQISLFQAMQKGLIVREHG), 2940-2977 (IRLLEAQIATGGVIDPVHSHRVPVDVAYRRGYFDEEMN), and 2981-3015 (ADPSDDTKGFFDPNTHENLTYLQLLERCVEDPETG). Residue T2886 is modified to Phosphothreonine. Y3033 bears the Phosphotyrosine mark. A Phosphoserine modification is found at S3036. N6-acetyllysine occurs at positions 3053 and 3091. Plectin repeat units follow at residues 3116-3153 (SLVPAAELLESRVIDRELYQQLQRGERSVRDVAEVDTV), 3154-3191 (RRALRGANVIAGVWLEEAGQKLSIYNALKKDLLPSDMA), 3192-3229 (VALLEAQAGTGHIIDPATSARLTVDEAVRAGLVGPEFH), 3230-3267 (EKLLSAEKAVTGYRDPYTGQSVSLFQALKKGLIPREQG), 3268-3305 (LRLLDAQLSTGGIVDPSKSHRVPLDVACARGCLDEETS), and 3306-3343 (RALSAPRADAKAYSDPSTGEPATYGELQQRCRPDQLTG). The disordered stretch occupies residues 3310-3331 (APRADAKAYSDPSTGEPATYGE). Y3362 bears the Phosphotyrosine mark. The residue at position 3420 (K3420) is an N6-acetyllysine. 5 Plectin repeats span residues 3485–3522 (RTLLQGSGCLAGIYLEDTKEKVSIYEAMRRGLLRATTA), 3523–3560 (ALLLEAQAATGFLVDPVRNQRLYVHEAVKAGVVGPELH), 3561–3598 (EQLLSAEKAVTGYRDPYSGSTISLFQAMQKGLVLRQHG), 3599–3636 (IRLLEAQIATGGIIDPVHSHRVPVDVAYQRGYFSEEMN), and 3640–3674 (ADPSDDTKGFFDPNTHENLTYRQLLERCVEDPETG). Residue S3580 is modified to Phosphoserine. Residue T3785 is modified to Phosphothreonine. Plectin repeat units follow at residues 3820-3857 (WCYLYGTGSVAGVYLPGSRQTLSIYQALKKGLLSAEVA), 3858-3895 (RLLLEAQAATGFLLDPVKGERLTVDEAVRKGLVGPELH), 3896-3933 (DRLLSAERAVTGYRDPYTEQTISLFQAMKKELIPTEEA), 3934-3971 (LRLLDAQLATGGIVDPRLGFHLPLEVAYQRGYLNKDTH), and 3975-4008 (SEPSEVRSYVDPSTDERLSYTQLLRRCRRDDGTG). A required for interaction with type2 keratins, DES and VIM region spans residues 3956–4293 (PLEVAYQRGY…ETGKEMSVYE (338 aa)). Phosphothreonine is present on T4030. Phosphoserine is present on S4054. Plectin repeat units lie at residues 4063–4100 (QKFLEGTSCIAGVFVDATKERLSVYQAMKKGIIRPGTA), 4101–4138 (FELLEAQAATGYVIDPIKGLKLTVEEAVRMGIVGPEFK), 4139–4176 (DKLLSAERAVTGYKDPYSGKLISLFQAMKKGLILKDHG), 4177–4214 (IRLLEAQIATGGIIDPEESHRLPVEVAYKRGLFDEEMN), 4218–4252 (TDPSDDTKGFFDPNTEENLTYLQLMERCITDPQTG), 4265–4305 (RKTS…HQTY), and 4319–4356 (TISSSDGVVKSMIIDRRSGRQYDIDDAIAKNLIDRSAL). Residues 4250–4300 (QTGLCLLPLKEKKRERKTSSKSSVRKRRVVIVDPETGKEMSVYEAYRKGLI) are binding to intermediate filaments. S4382, S4384, S4385, S4386, S4389, S4390, S4391, and S4392 each carry phosphoserine. Y4393 bears the Phosphotyrosine mark. S4396, S4400, and S4406 each carry phosphoserine. 5 Plectin repeats span residues 4408 to 4445 (SDPTEETGPVAGILDTETLEKVSITEAMHRNLVDNITG), 4446 to 4483 (QRLLEAQACTGGIIDPSTGERFPVTDAVNKGLVDKIMV), 4484 to 4521 (DRINLAQKAFCGFEDPRTKTKMSAAQALKKGWLYYEAG), 4522 to 4559 (QRFLEVQYLTGGLIEPDTPGRVPLDEALQRGTVDARTA), and 4560 to 4597 (QKLRDVGAYSKYLTCPKTKLKISYKDALDRSMVEEGTG). A Phosphothreonine modification is found at T4411. A required for efficient interaction with KRT5 and KRT14 heterodimers region spans residues 4505-4574 (MSAAQALKKG…VGAYSKYLTC (70 aa)). Phosphothreonine; by CDK1 is present on T4539. S4607 and S4613 each carry phosphoserine. The span at 4611 to 4678 (YYSPYSVSGS…ASGSSASLGG (68 aa)) shows a compositional bias: low complexity. Residues 4611-4684 (YYSPYSVSGS…SLGGPESAVA (74 aa)) form a disordered region. Y4615 is modified (phosphotyrosine). A phosphoserine mark is found at S4616, S4618, and S4622. T4623 carries the post-translational modification Phosphothreonine. The interval 4625 to 4640 (GSRTGSRTGSRAGSRR) is 4 X 4 AA tandem repeats of G-S-R-X. S4626 is subject to Phosphoserine. 2 positions are modified to omega-N-methylarginine: R4627 and R4640. S4642, S4672, and S4675 each carry phosphoserine.

Belongs to the plakin or cytolinker family. Homodimer or homotetramer. Interacts (via actin-binding domain) with SYNE3. Interacts (via calponin-homology (CH) 1 domain) with VIM (via rod region). Interacts (via N-terminus) with DST isoform 2 (via N-terminus). Interacts with FER. Interacts with TOR1A. Interacts with ANK3. Identified in complexes that contain VIM, EZR, AHNAK, BFSP1, BFSP2, ANK2, PLEC, PRX and spectrin. Interacts with COL17A1. As to quaternary structure, interacts with KRT14, heterodimers consisting of KRT8 and KRT18, heterodimers consisting of KRT5 and KRT14, heterodimers consisting of KRT14 and KRT15, and heterodimers consisting of KRT1 and KRT10. Interacts with DES and VIM. In terms of processing, phosphorylated by CDK1; regulates dissociation from intermediate filaments during mitosis. As to expression, widely expressed with highest levels in muscle, heart, placenta and spinal cord.

The protein localises to the cytoplasm. It is found in the cytoskeleton. It localises to the cell junction. Its subcellular location is the hemidesmosome. The protein resides in the cell projection. The protein localises to the podosome. In terms of biological role, interlinks intermediate filaments with microtubules and microfilaments and anchors intermediate filaments to desmosomes or hemidesmosomes. Could also bind muscle proteins such as actin to membrane complexes in muscle. May be involved not only in the filaments network, but also in the regulation of their dynamics. Structural component of muscle. Isoform 9 plays a major role in the maintenance of myofiber integrity. This chain is Plectin (PLEC), found in Homo sapiens (Human).